Reading from the N-terminus, the 555-residue chain is Oxygen-dependent choline dehydrogenase (555 aa).

Position 4 to 33 (4 to 33) interacts with FAD; that stretch reads DYIIIGAGSAGNVLATRLTEDPDVTVLLLE. The active-site Proton acceptor is the His473.

Belongs to the GMC oxidoreductase family. It depends on FAD as a cofactor.

The catalysed reaction is choline + A = betaine aldehyde + AH2. It catalyses the reaction betaine aldehyde + NAD(+) + H2O = glycine betaine + NADH + 2 H(+). It participates in amine and polyamine biosynthesis; betaine biosynthesis via choline pathway; betaine aldehyde from choline (cytochrome c reductase route): step 1/1. Its function is as follows. Involved in the biosynthesis of the osmoprotectant glycine betaine. Catalyzes the oxidation of choline to betaine aldehyde and betaine aldehyde to glycine betaine at the same rate. The sequence is that of Oxygen-dependent choline dehydrogenase from Proteus mirabilis (strain HI4320).